The primary structure comprises 237 residues: Leucyl/phenylalanyl-tRNA--protein transferase (237 aa).

Belongs to the L/F-transferase family.

It is found in the cytoplasm. The enzyme catalyses N-terminal L-lysyl-[protein] + L-leucyl-tRNA(Leu) = N-terminal L-leucyl-L-lysyl-[protein] + tRNA(Leu) + H(+). It catalyses the reaction N-terminal L-arginyl-[protein] + L-leucyl-tRNA(Leu) = N-terminal L-leucyl-L-arginyl-[protein] + tRNA(Leu) + H(+). It carries out the reaction L-phenylalanyl-tRNA(Phe) + an N-terminal L-alpha-aminoacyl-[protein] = an N-terminal L-phenylalanyl-L-alpha-aminoacyl-[protein] + tRNA(Phe). Functionally, functions in the N-end rule pathway of protein degradation where it conjugates Leu, Phe and, less efficiently, Met from aminoacyl-tRNAs to the N-termini of proteins containing an N-terminal arginine or lysine. This is Leucyl/phenylalanyl-tRNA--protein transferase (aat) from Vibrio vulnificus (strain CMCP6).